The primary structure comprises 309 residues: Elongation factor Ts (309 aa).

Positions 82-85 are involved in Mg(2+) ion dislocation from EF-Tu; it reads TDFV.

The protein belongs to the EF-Ts family.

The protein resides in the cytoplasm. Its function is as follows. Associates with the EF-Tu.GDP complex and induces the exchange of GDP to GTP. It remains bound to the aminoacyl-tRNA.EF-Tu.GTP complex up to the GTP hydrolysis stage on the ribosome. The polypeptide is Elongation factor Ts (Rickettsia africae (strain ESF-5)).